The primary structure comprises 207 residues: LexA repressor (207 aa).

The segment at residues 28-48 (RAEIASRLGFKSANAAEEHLK) is a DNA-binding region (H-T-H motif). Catalysis depends on for autocatalytic cleavage activity residues Ser-124 and Lys-161.

The protein belongs to the peptidase S24 family. Homodimer.

It catalyses the reaction Hydrolysis of Ala-|-Gly bond in repressor LexA.. Functionally, represses a number of genes involved in the response to DNA damage (SOS response), including recA and lexA. In the presence of single-stranded DNA, RecA interacts with LexA causing an autocatalytic cleavage which disrupts the DNA-binding part of LexA, leading to derepression of the SOS regulon and eventually DNA repair. The polypeptide is LexA repressor (Shewanella amazonensis (strain ATCC BAA-1098 / SB2B)).